The chain runs to 304 residues: D-alanine--D-alanine ligase (304 aa).

Residues 103 to 299 (KLIWQALGLP…FADLCIEILK (197 aa)) form the ATP-grasp domain. 129–184 (EEKLGLPMFVKPAAEGSSVGVVKVKEKGRLKSVYEELKHLQGEIIAERFIGGGEYS) is an ATP binding site. 3 residues coordinate Mg(2+): Asp-253, Glu-266, and Asn-268.

It belongs to the D-alanine--D-alanine ligase family. It depends on Mg(2+) as a cofactor. Requires Mn(2+) as cofactor.

The protein localises to the cytoplasm. It catalyses the reaction 2 D-alanine + ATP = D-alanyl-D-alanine + ADP + phosphate + H(+). It participates in cell wall biogenesis; peptidoglycan biosynthesis. Its function is as follows. Cell wall formation. The protein is D-alanine--D-alanine ligase of Neisseria gonorrhoeae (strain ATCC 700825 / FA 1090).